A 396-amino-acid polypeptide reads, in one-letter code: Elongation factor Tu 1 (396 aa).

The region spanning 10-206 (KPHINVGTIG…AMDAHIPQPE (197 aa)) is the tr-type G domain. The segment at 19 to 26 (GHVDHGKT) is G1. 19-26 (GHVDHGKT) lines the GTP pocket. Thr-26 is a Mg(2+) binding site. The tract at residues 60-64 (GITIA) is G2. The tract at residues 81-84 (DCPG) is G3. Residues 81-85 (DCPGH) and 136-139 (NKAD) contribute to the GTP site. The G4 stretch occupies residues 136 to 139 (NKAD). The tract at residues 174-176 (SAL) is G5.

It belongs to the TRAFAC class translation factor GTPase superfamily. Classic translation factor GTPase family. EF-Tu/EF-1A subfamily. As to quaternary structure, monomer.

The protein resides in the cytoplasm. It carries out the reaction GTP + H2O = GDP + phosphate + H(+). GTP hydrolase that promotes the GTP-dependent binding of aminoacyl-tRNA to the A-site of ribosomes during protein biosynthesis. The polypeptide is Elongation factor Tu 1 (Halorhodospira halophila (strain DSM 244 / SL1) (Ectothiorhodospira halophila (strain DSM 244 / SL1))).